Here is an 85-residue protein sequence, read N- to C-terminus: Protein C4 (85 aa).

Gly-2 carries N-myristoyl glycine; by host lipidation. Positions 42–65 are disordered; it reads LNPAPTSSPTSTRTETQLNGGNSR. The segment covering 44-57 has biased composition (low complexity); that stretch reads PAPTSSPTSTRTET.

The protein belongs to the geminiviridae protein AC4/C4 family. In terms of assembly, interacts with Arabidopsis thaliana RCH2, ASK7/ASK-eta and ASK6/ASK-zeta. In terms of processing, phosphorylated by Arabidopsis thaliana ASK7/ASK-eta mainly on threonine and serine residues. As to expression, expressed in vascular tissues, and especially in phloem cells.

The protein resides in the host cell membrane. Major determinant of pathogenesis that affects the hyperplastic response of the host to viral infection. Mediates the induction of cell division in permissive cells, mainly in phloem. May act as a suppressor of RNA-mediated gene silencing, also known as post-transcriptional gene silencing (PTGS), a mechanism of plant viral defense that limits the accumulation of viral RNAs. This is Protein C4 from Beet curly top virus (strain California/Logan) (BCTV).